A 256-amino-acid polypeptide reads, in one-letter code: uncharacterized protein (256 aa).

Positions 1–24 (MIKRVNKLVLGISLLFLVISITAG) are cleaved as a signal peptide. Cysteine 25 is lipidated: N-palmitoyl cysteine. A lipid anchor (S-diacylglycerol cysteine) is attached at cysteine 25.

This sequence belongs to the staphylococcal tandem lipoprotein family.

It is found in the cell membrane. This is an uncharacterized protein from Staphylococcus aureus (strain MW2).